We begin with the raw amino-acid sequence, 436 residues long: MAFVDQATIEMKAGNGGDGIISFRHEKFVPLGGPFGGDGGKGGDIYFIVDEGLRTLMDFRYNRHFRAKHGEKGGTKGMTGASADDLYVKVPAGTIISNADTNQQIVDLTENGKKFLIAHGGRGGRGNMRFATPSNPAPEISENGEPGETLKVKLELRVLADVGLVGFPSAGKSTFLSVVTAARPKIAAYHFTTIDPNLGMVQLPDGRDFTIADLPGLIKGASKGVGLGFEFLRHVERTRVLLHMIDMSEESGLGIKPFEAYLQINQELKSYDPRLLDRPMIIVATKMDLPSSKANLEDFKQELANRQINMPIVEISSVTQTGTKQLLLKVADLLDKTPRMIERKEEQSTDDRLYEFKDDHQSTDFQIEHEGDDWIIVSERISKLAKMTNKTTDESLRRFARQLRSFGVDDKLREAGAKDGDMVYIDGADFAFEFEE.

The Obg domain maps to Met-1–Leu-159. The region spanning Ala-160–Asp-335 is the OBG-type G domain. GTP contacts are provided by residues Gly-166–Ser-173, Phe-191–Asp-195, Asp-213–Gly-216, Thr-285–Asp-288, and Ser-316–Val-318. Residues Ser-173 and Thr-193 each contribute to the Mg(2+) site. The OCT domain maps to Lys-357–Glu-436.

Belongs to the TRAFAC class OBG-HflX-like GTPase superfamily. OBG GTPase family. As to quaternary structure, monomer. It depends on Mg(2+) as a cofactor.

The protein localises to the cytoplasm. An essential GTPase which binds GTP, GDP and possibly (p)ppGpp with moderate affinity, with high nucleotide exchange rates and a fairly low GTP hydrolysis rate. Plays a role in control of the cell cycle, stress response, ribosome biogenesis and in those bacteria that undergo differentiation, in morphogenesis control. The protein is GTPase Obg of Oenococcus oeni (strain ATCC BAA-331 / PSU-1).